A 310-amino-acid polypeptide reads, in one-letter code: MLKEKKDKEKNIYMIPKILKSSKSKSILKKPKWLKIKLPSNLKKINKIKKILKKNFLHSVCEEANCPNLPECFNNGTATFMILGSICTRKCPFCAVTKGRAQKIDKNEPKKILDIVIKLKLTYVVLTSVARDDLKDGGAKHFSKCIYEIRKKKNIKVEILVPDFRGKEKIALKIFNKFPPDIFNHNIENVPRLYSLIRPGADYIKSLNLLYQFKKICPNIPTKSGLMLGLGEKKKEIISVLKDLKSVGVSIVTIGQYLQPSKNHLLVQKYITPKEFKNFEYIALSLGFSKVFCGPLVRSSYHADRQYLSF.

The [4Fe-4S] cluster site is built by C61, C66, C72, C87, C91, C94, and S300. Positions 73–289 (FNNGTATFMI…EYIALSLGFS (217 aa)) constitute a Radical SAM core domain.

Belongs to the radical SAM superfamily. Lipoyl synthase family. [4Fe-4S] cluster is required as a cofactor.

The protein resides in the cytoplasm. It carries out the reaction [[Fe-S] cluster scaffold protein carrying a second [4Fe-4S](2+) cluster] + N(6)-octanoyl-L-lysyl-[protein] + 2 oxidized [2Fe-2S]-[ferredoxin] + 2 S-adenosyl-L-methionine + 4 H(+) = [[Fe-S] cluster scaffold protein] + N(6)-[(R)-dihydrolipoyl]-L-lysyl-[protein] + 4 Fe(3+) + 2 hydrogen sulfide + 2 5'-deoxyadenosine + 2 L-methionine + 2 reduced [2Fe-2S]-[ferredoxin]. The protein operates within protein modification; protein lipoylation via endogenous pathway; protein N(6)-(lipoyl)lysine from octanoyl-[acyl-carrier-protein]: step 2/2. In terms of biological role, catalyzes the radical-mediated insertion of two sulfur atoms into the C-6 and C-8 positions of the octanoyl moiety bound to the lipoyl domains of lipoate-dependent enzymes, thereby converting the octanoylated domains into lipoylated derivatives. This chain is Lipoyl synthase, found in Buchnera aphidicola subsp. Cinara cedri (strain Cc).